The chain runs to 217 residues: Homologous-pairing protein 2 homolog (217 aa).

Residues 93 to 153 (IVALTAKVQS…LKNIKAATNH (61 aa)) adopt a coiled-coil conformation. The DNA-binding stretch occupies residues 118-182 (SSALTTPEMQ…WRKRKRMATE (65 aa)).

It belongs to the HOP2 family. As to quaternary structure, interacts with the DNA-binding domain of the nuclear receptors NR3C1/GR, ESR2/ER-beta, THRB and RXRA. Forms a stable heterodimer with MND1. Interacts with PSMC3/TBP1. In terms of processing, PTM: Phosphorylated by PKA, PKC and MAPK. In terms of tissue distribution, highly expressed in testis and colon.

It is found in the nucleus. Functionally, plays an important role in meiotic recombination. Stimulates DMC1-mediated strand exchange required for pairing homologous chromosomes during meiosis. The complex PSMC3IP/MND1 binds DNA, stimulates the recombinase activity of DMC1 as well as DMC1 D-loop formation from double-strand DNA. This complex stabilizes presynaptic RAD51 and DMC1 filaments formed on single strand DNA to capture double-strand DNA. This complex stimulates both synaptic and presynaptic critical steps in RAD51 and DMC1-promoted homologous pairing. May inhibit HIV-1 viral protein TAT activity and modulate the activity of proteasomes through association with PSMC3. Acts as a tissue specific coactivator of hormone-dependent transcription mediated by nuclear receptors. This Homo sapiens (Human) protein is Homologous-pairing protein 2 homolog (PSMC3IP).